Consider the following 448-residue polypeptide: UPF0210 protein PAE3581 (448 aa).

It belongs to the UPF0210 family.

In Pyrobaculum aerophilum (strain ATCC 51768 / DSM 7523 / JCM 9630 / CIP 104966 / NBRC 100827 / IM2), this protein is UPF0210 protein PAE3581.